Here is a 449-residue protein sequence, read N- to C-terminus: AP-4 complex subunit mu-1 (449 aa).

Residues 184-448 (KNEVFLDVVE…LSHSNAYVIR (265 aa)) enclose the MHD domain.

It belongs to the adaptor complexes medium subunit family. Adaptor protein complex 4 (AP-4) is a heterotetramer composed of two large adaptins (epsilon-type subunit AP4E1 and beta-type subunit AP4B1), a medium adaptin (mu-type subunit AP4M1) and a small adaptin (sigma-type AP4S1). Interacts with tyrosine-based sorting signals on the cytoplasmic tail of cargo proteins such as APP, ATG9A, LAMP2 and NAGPA. Interacts with the C-terminal domain of GRID2. Interacts with GRIA1 and GRIA2; the interaction is indirect via CACNG3. Interacts with CACNG3; CACNG3 associates GRIA1 and GRIA2 with the adaptor protein complex 4 (AP-4) to target them to the somatodendritic compartment of neurons. Interacts with HOOK1 and HOOK2; the interactions are direct, mediate the interaction between FTS-Hook-FHIP (FHF) complex and AP-4 and the perinuclear distribution of AP-4.

Its subcellular location is the golgi apparatus. It localises to the trans-Golgi network membrane. It is found in the early endosome. Functionally, component of the adaptor protein complex 4 (AP-4). Adaptor protein complexes are vesicle coat components involved both in vesicle formation and cargo selection. They control the vesicular transport of proteins in different trafficking pathways. AP-4 forms a non clathrin-associated coat on vesicles departing the trans-Golgi network (TGN) and may be involved in the targeting of proteins from the trans-Golgi network (TGN) to the endosomal-lysosomal system. It is also involved in protein sorting to the basolateral membrane in epithelial cells and the proper asymmetric localization of somatodendritic proteins in neurons. Within AP-4, the mu-type subunit AP4M1 is directly involved in the recognition and binding of tyrosine-based sorting signals found in the cytoplasmic part of cargos. The adaptor protein complex 4 (AP-4) may also recognize other types of sorting signal. This Mus musculus (Mouse) protein is AP-4 complex subunit mu-1.